We begin with the raw amino-acid sequence, 358 residues long: 3-dehydroquinate synthase (358 aa).

NAD(+)-binding positions include 105-109 (GVVGD), 129-130 (TT), lysine 142, lysine 151, and 169-172 (TLKT). Glutamate 184, histidine 245, and histidine 262 together coordinate Zn(2+).

Belongs to the sugar phosphate cyclases superfamily. Dehydroquinate synthase family. It depends on NAD(+) as a cofactor. The cofactor is Co(2+). Zn(2+) is required as a cofactor.

The protein localises to the cytoplasm. It catalyses the reaction 7-phospho-2-dehydro-3-deoxy-D-arabino-heptonate = 3-dehydroquinate + phosphate. Its pathway is metabolic intermediate biosynthesis; chorismate biosynthesis; chorismate from D-erythrose 4-phosphate and phosphoenolpyruvate: step 2/7. In terms of biological role, catalyzes the conversion of 3-deoxy-D-arabino-heptulosonate 7-phosphate (DAHP) to dehydroquinate (DHQ). The polypeptide is 3-dehydroquinate synthase (Enterococcus faecalis (strain ATCC 700802 / V583)).